Here is a 67-residue protein sequence, read N- to C-terminus: DNA-directed RNA polymerase subunit omega (67 aa).

Belongs to the RNA polymerase subunit omega family. As to quaternary structure, the RNAP catalytic core consists of 2 alpha, 1 beta, 1 beta' and 1 omega subunit. When a sigma factor is associated with the core the holoenzyme is formed, which can initiate transcription.

It catalyses the reaction RNA(n) + a ribonucleoside 5'-triphosphate = RNA(n+1) + diphosphate. Functionally, promotes RNA polymerase assembly. Latches the N- and C-terminal regions of the beta' subunit thereby facilitating its interaction with the beta and alpha subunits. The protein is DNA-directed RNA polymerase subunit omega of Burkholderia multivorans (strain ATCC 17616 / 249).